A 332-amino-acid chain; its full sequence is Holliday junction branch migration complex subunit RuvB (332 aa).

Residues 1 to 181 (MARILDNDVM…FGITGHMEYY (181 aa)) form a large ATPase domain (RuvB-L) region. Residues Leu20, Arg21, Gly62, Lys65, Thr66, Thr67, 128-130 (EDF), Arg171, Tyr181, and Arg218 each bind ATP. Thr66 contacts Mg(2+). Residues 182-252 (QEKDLTEIVE…ITDRALTMLD (71 aa)) are small ATPAse domain (RuvB-S). The segment at 255 to 332 (REGLDYIDQK…RHLGYPYQNT (78 aa)) is head domain (RuvB-H). Residues Arg291, Arg310, Arg312, and Arg315 each contribute to the DNA site.

This sequence belongs to the RuvB family. Homohexamer. Forms an RuvA(8)-RuvB(12)-Holliday junction (HJ) complex. HJ DNA is sandwiched between 2 RuvA tetramers; dsDNA enters through RuvA and exits via RuvB. An RuvB hexamer assembles on each DNA strand where it exits the tetramer. Each RuvB hexamer is contacted by two RuvA subunits (via domain III) on 2 adjacent RuvB subunits; this complex drives branch migration. In the full resolvosome a probable DNA-RuvA(4)-RuvB(12)-RuvC(2) complex forms which resolves the HJ.

Its subcellular location is the cytoplasm. It catalyses the reaction ATP + H2O = ADP + phosphate + H(+). The RuvA-RuvB-RuvC complex processes Holliday junction (HJ) DNA during genetic recombination and DNA repair, while the RuvA-RuvB complex plays an important role in the rescue of blocked DNA replication forks via replication fork reversal (RFR). RuvA specifically binds to HJ cruciform DNA, conferring on it an open structure. The RuvB hexamer acts as an ATP-dependent pump, pulling dsDNA into and through the RuvAB complex. RuvB forms 2 homohexamers on either side of HJ DNA bound by 1 or 2 RuvA tetramers; 4 subunits per hexamer contact DNA at a time. Coordinated motions by a converter formed by DNA-disengaged RuvB subunits stimulates ATP hydrolysis and nucleotide exchange. Immobilization of the converter enables RuvB to convert the ATP-contained energy into a lever motion, pulling 2 nucleotides of DNA out of the RuvA tetramer per ATP hydrolyzed, thus driving DNA branch migration. The RuvB motors rotate together with the DNA substrate, which together with the progressing nucleotide cycle form the mechanistic basis for DNA recombination by continuous HJ branch migration. Branch migration allows RuvC to scan DNA until it finds its consensus sequence, where it cleaves and resolves cruciform DNA. In Streptococcus pyogenes serotype M3 (strain ATCC BAA-595 / MGAS315), this protein is Holliday junction branch migration complex subunit RuvB.